The chain runs to 231 residues: Maleylacetoacetate isomerase maiA (231 aa).

A GST N-terminal domain is found at 7-93; sequence PKVTLYTYFR…YLEEITPASS (87 aa). The GST C-terminal domain occupies 102–224; sequence NPEARAVVRT…HWRTQPDTPE (123 aa).

The protein belongs to the GST superfamily. Zeta family.

The enzyme catalyses 4-maleylacetoacetate = 4-fumarylacetoacetate. Its pathway is amino-acid degradation; L-phenylalanine degradation; acetoacetate and fumarate from L-phenylalanine: step 5/6. Maleylacetoacetate isomerase; part of the L-tyrosine degradation gene cluster that mediates the biosynthesis of the brownish pigment pyomelanin as an alternative melanin. The 4-hydroxyphenylpyruvate dioxygenase hppD catalyzes the conversion of 4-hydroxyphenylpyruvate to homogentisic acid (HGA). The protein hmgX is crucial for this conversion and thus, probably functions as an accessory factor to mediate specific activity of hppD. The homogentisate 1,2-dioxygenase hmgA is then involved in the cleavage of the aromatic ring of HGA and its conversion to 4-maleylacetoacetate. When hmgA activity is lowered by the cell wall integrity (CWI) signaling pathway, HGA accumulates and leads to the production of pyomelanin through benzoquinone acetic acid after oxidation and polymerization. On the opposite, in non-stress conditions, both hppD and hmgA activities are balanced and HGA is degraded into 4-maleylacetoacetate. 4-maleylacetoacetate is further converted to 4-fumarylacetoacetate by the maleylacetoacetate isomerase maiA, which is degraded into fumarate and acetoacetate by the fumarylacetoacetase fahA. The sequence is that of Maleylacetoacetate isomerase maiA from Aspergillus fumigatus (strain ATCC MYA-4609 / CBS 101355 / FGSC A1100 / Af293) (Neosartorya fumigata).